A 633-amino-acid polypeptide reads, in one-letter code: Probable potassium transport system protein Kup 2 (633 aa).

Transmembrane regions (helical) follow at residues 59 to 79 (ISAILWALMVVVSLKYVILIM), 110 to 130 (ILLVGLFGAALFYGDAVLTPA), 145 to 165 (TALQPYVLPASVGVLIALFLF), 173 to 193 (IGALFGPVTIVWFLALAAAGI), 219 to 239 (GFASFAVLGAVLLAFTGAEAL), 256 to 276 (FGLVFPALALNYLGQGALIIV), 287 to 307 (LLYPSWALYPMVALATAATVI), 345 to 365 (IYIPTLNGMLLVAVLVAVLGF), 374 to 394 (AYGVAVTGTMLVTTLLTFFVI), 402 to 422 (LLLSLVATGFFIAVDMAFVSS), and 429 to 449 (EGGWFPLVVGAGIFVVMLTWV).

It belongs to the HAK/KUP transporter (TC 2.A.72) family.

It localises to the cell inner membrane. The catalysed reaction is K(+)(in) + H(+)(in) = K(+)(out) + H(+)(out). Transport of potassium into the cell. Likely operates as a K(+):H(+) symporter. The sequence is that of Probable potassium transport system protein Kup 2 from Cupriavidus necator (strain ATCC 17699 / DSM 428 / KCTC 22496 / NCIMB 10442 / H16 / Stanier 337) (Ralstonia eutropha).